A 398-amino-acid polypeptide reads, in one-letter code: Phosphoglycerate kinase (398 aa).

Substrate is bound by residues 23–25 (DLN), R38, 61–64 (HFGR), R119, and R152. ATP contacts are provided by residues K202, E324, and 354–357 (GGDT).

It belongs to the phosphoglycerate kinase family. Monomer.

It is found in the cytoplasm. It catalyses the reaction (2R)-3-phosphoglycerate + ATP = (2R)-3-phospho-glyceroyl phosphate + ADP. The protein operates within carbohydrate degradation; glycolysis; pyruvate from D-glyceraldehyde 3-phosphate: step 2/5. This is Phosphoglycerate kinase from Bradyrhizobium diazoefficiens (strain JCM 10833 / BCRC 13528 / IAM 13628 / NBRC 14792 / USDA 110).